Here is a 436-residue protein sequence, read N- to C-terminus: Xaa-Arg dipeptidase (436 aa).

This sequence belongs to the peptidase M20A family.

The enzyme catalyses beta-alanyl-L-lysine + H2O = beta-alanine + L-lysine. It catalyses the reaction beta-alanyl-L-ornithine + H2O = beta-alanine + L-ornithine. The catalysed reaction is N(2)-(4-aminobutanoyl)-L-lysine + H2O = 4-aminobutanoate + L-lysine. It carries out the reaction N(2)-(4-aminobutanoyl)-L-ornithine + H2O = 4-aminobutanoate + L-ornithine. The enzyme catalyses N(2)-(4-aminobutanoyl)-L-arginine + H2O = 4-aminobutanoate + L-arginine. Catalyzes the peptide bond hydrolysis in dipeptides having basic amino acids lysine, ornithine or arginine at C-terminus. Postulated to function in a metabolite repair mechanism by eliminating alternate dipeptide by-products formed during carnosine synthesis. This chain is Xaa-Arg dipeptidase, found in Homo sapiens (Human).